The sequence spans 491 residues: Acetyl-coenzyme A carboxylase carboxyl transferase subunit beta, chloroplastic (491 aa).

Positions 224–491 constitute a CoA carboxyltransferase N-terminal domain; that stretch reads LWIQCENCYG…FFPLNPKKIK (268 aa). Positions 228, 231, 247, and 250 each coordinate Zn(2+). The segment at 228–250 adopts a C4-type zinc-finger fold; it reads CENCYGLNYKKNLKSKINICEQC.

It belongs to the AccD/PCCB family. As to quaternary structure, acetyl-CoA carboxylase is a heterohexamer composed of biotin carboxyl carrier protein, biotin carboxylase and 2 subunits each of ACCase subunit alpha and ACCase plastid-coded subunit beta (accD). The cofactor is Zn(2+).

The protein resides in the plastid. The protein localises to the chloroplast stroma. It carries out the reaction N(6)-carboxybiotinyl-L-lysyl-[protein] + acetyl-CoA = N(6)-biotinyl-L-lysyl-[protein] + malonyl-CoA. It participates in lipid metabolism; malonyl-CoA biosynthesis; malonyl-CoA from acetyl-CoA: step 1/1. Functionally, component of the acetyl coenzyme A carboxylase (ACC) complex. Biotin carboxylase (BC) catalyzes the carboxylation of biotin on its carrier protein (BCCP) and then the CO(2) group is transferred by the transcarboxylase to acetyl-CoA to form malonyl-CoA. The chain is Acetyl-coenzyme A carboxylase carboxyl transferase subunit beta, chloroplastic from Vitis vinifera (Grape).